The following is a 450-amino-acid chain: Magnesium transporter MgtE (450 aa).

Residues 1-283 (MEEKLAVSLQ…SEAGPVALWL (283 aa)) lie on the Cytoplasmic side of the membrane. Glutamate 59, aspartate 91, aspartate 95, and glycine 136 together coordinate Mg(2+). 2 consecutive CBS domains span residues 138–200 (MTPE…RVAE) and 202–258 (MNPK…EATE). Residues tyrosine 170, serine 185, arginine 187, aspartate 188, and valine 207 each contribute to the ATP site. The Mg(2+) site is built by glutamate 216, alanine 223, aspartate 226, aspartate 247, aspartate 250, glutamate 255, glutamate 258, and aspartate 259. Glutamate 275 is a Ca(2+) binding site. Residues glutamate 275, glutamine 304, glutamate 307, and glutamate 311 each coordinate Mn(2+). Residues 284–306 (ARVRWLVILILTGMVTSSILQGF) traverse the membrane as a helical segment. Over 307-315 (ESVLEAVTA) the chain is Periplasmic. Glutamate 311 serves as a coordination point for Ca(2+). Residues 316-337 (LAFYVPVLLGTGGNTGNQSATL) traverse the membrane as a helical segment. The Cytoplasmic segment spans residues 338–351 (IIRALATRDLDLRD). A helical membrane pass occupies residues 352-381 (WRRVFLKEMGVGLLLGLTLSFLLVGKVYWD). Over 382-385 (GHPL) the chain is Periplasmic. Residue histidine 383 coordinates Mn(2+). A helical transmembrane segment spans residues 386–409 (LLPVVGVSLVLIVFFANLVGAMLP). Over 410–420 (FLLRRLGVDPA) the chain is Cytoplasmic. Mg(2+)-binding residues include aspartate 418, alanine 428, and aspartate 432. A helical membrane pass occupies residues 421–443 (LVSNPLVATLSDVTGLLIYLSVA). Topologically, residues 444–450 (RLLLEAV) are periplasmic.

Belongs to the SLC41A transporter family. In terms of assembly, homodimer.

Its subcellular location is the cell inner membrane. It carries out the reaction Mg(2+)(in) = Mg(2+)(out). The channel activity is regulated via the N-terminal cytoplasmic region, which acts as a Mg(2+) sensor to regulate the gating of the ion-conducting pore in response to the intracellular magnesium concentration. Under high-intracellular magnesium conditions, binding of magnesium to the N-terminal cytoplasmic domain stabilizes the closed conformation of the channel. Under low-intracellular magnesium conditions, the channel is in equilibrium between the open and closed states. A cation-binding site within the membrane (M1) strictly recognizes the size and geometry of the Mg(2+) hydration shells, which may be important for the selective transport of Mg(2+) over other cations. Cation-binding sites on the periplasmic side (M2 and M3) regulate channel opening and prevent conduction of near-cognate cations. Binding of Mn(2+) to the periplasmic sites strongly inhibits the Mg(2+) transport activity. In addition, activity is regulated by ATP, which binds to MgtE and modulates its Mg(2+)-dependent channel gating. ATP binding enhances the intracellular domain affinity for Mg(2+) within physiological concentrations of this divalent cation, enabling MgtE to function as an in vivo Mg(2+) sensor. ATP dissociation from MgtE upregulates Mg(2+) influx at both high and low intracellular Mg(2+) concentrations. Functionally, highly selective magnesium channel that plays an important role in Mg(2+) homeostasis. Functions as a Mg(2+)-dependent gating channel. Exhibits low activity with cobalt, suggesting that it might also be involved in the uptake of Co(2+) as a micronutrient. Also exhibits low activity with Ca(2+), but it shows almost no activity with Mn(2+). This is Magnesium transporter MgtE from Thermus thermophilus (strain ATCC 27634 / DSM 579 / HB8).